Consider the following 294-residue polypeptide: Probable 2-(5''-triphosphoribosyl)-3'-dephosphocoenzyme-A synthase (294 aa).

It belongs to the CitG/MdcB family.

It catalyses the reaction 3'-dephospho-CoA + ATP = 2'-(5''-triphospho-alpha-D-ribosyl)-3'-dephospho-CoA + adenine. The polypeptide is Probable 2-(5''-triphosphoribosyl)-3'-dephosphocoenzyme-A synthase (Streptococcus equi subsp. zooepidemicus (strain MGCS10565)).